The chain runs to 117 residues: Small ribosomal subunit protein uS17 (117 aa).

It belongs to the universal ribosomal protein uS17 family. In terms of assembly, part of the 30S ribosomal subunit.

Its function is as follows. One of the primary rRNA binding proteins, it binds specifically to the 5'-end of 16S ribosomal RNA. The polypeptide is Small ribosomal subunit protein uS17 (Methanocaldococcus jannaschii (strain ATCC 43067 / DSM 2661 / JAL-1 / JCM 10045 / NBRC 100440) (Methanococcus jannaschii)).